Consider the following 482-residue polypeptide: Putative dipeptidase NECHADRAFT_87110 (482 aa).

Residues 1-21 (MADTQTPNLQNTAEGDANTSA) show a composition bias toward polar residues. Positions 1 to 24 (MADTQTPNLQNTAEGDANTSAENE) are disordered. Asn-18 carries an N-linked (GlcNAc...) asparagine glycan. A helical transmembrane segment spans residues 41–61 (WLRYPFLVAGIALFLGPFSFF). Zn(2+)-binding residues include His-90, Asp-92, and Glu-201. An intrachain disulfide couples Cys-141 to Cys-230. His-228 lines the substrate pocket. Zn(2+) contacts are provided by His-272 and His-293. Positions 304 and 364 each coordinate substrate.

It belongs to the metallo-dependent hydrolases superfamily. Peptidase M19 family. Zn(2+) is required as a cofactor.

It localises to the membrane. It carries out the reaction an L-aminoacyl-L-amino acid + H2O = 2 an L-alpha-amino acid. In terms of biological role, hydrolyzes a wide range of dipeptides. This is Putative dipeptidase NECHADRAFT_87110 from Fusarium vanettenii (strain ATCC MYA-4622 / CBS 123669 / FGSC 9596 / NRRL 45880 / 77-13-4) (Fusarium solani subsp. pisi).